A 388-amino-acid chain; its full sequence is Na(+)/H(+) antiporter NhaA (388 aa).

At 1 to 11 (MKHLHRFFSSD) the chain is on the cytoplasmic side. The helical transmembrane segment at 12-31 (ASGGIILIIAAILAMIMANS) threads the bilayer. The Periplasmic portion of the chain corresponds to 32 to 58 (GATSGWYHDFLETPVQLRVGSLEINKN). A helical transmembrane segment spans residues 59–80 (MLLWINDALMAVFFLLVGLEVK). At 81-96 (RELMQGSLASLRQAAF) the chain is on the cytoplasmic side. The helical transmembrane segment at 97-116 (PVIAAIGGMIVPALLYLAFN) threads the bilayer. At 117–122 (YADPIT) the chain is on the periplasmic side. A helical membrane pass occupies residues 123-130 (REGWAIPA). Residues 131-154 (ATDIAFALGVLALLGSRVPLVLKI) lie on the Cytoplasmic side of the membrane. A helical transmembrane segment spans residues 155–176 (FLMALAIIDDLGAIIIIALFYT). Residues 177–180 (NDLS) are Periplasmic-facing. A helical membrane pass occupies residues 181–200 (MASLGVAAVAIAVLAVLNLC). The Cytoplasmic portion of the chain corresponds to 201-204 (GVRR). A helical transmembrane segment spans residues 205-222 (TGVYILVGVVLWTAVLKS). Position 223 (Gly223) is a topological domain, periplasmic. A helical membrane pass occupies residues 224–236 (VHATLAGVIVGFF). At 237–253 (IPLKEKHGRSPAKRLEH) the chain is on the cytoplasmic side. A helical transmembrane segment spans residues 254–272 (VLHPWVAYLILPLFAFANA). Residues 273–286 (GVSLQGVTLDGLTS) are Periplasmic-facing. Residues 287–310 (ILPLGIIAGLLIGKPLGISLFCWL) form a helical membrane-spanning segment. Residues 311–339 (ALRLKLAHLPEGTTYQQIMVVGILCGIGF) lie on the Cytoplasmic side of the membrane. A helical transmembrane segment spans residues 340-350 (TMSIFIASLAF). Topologically, residues 351 to 357 (GSVDPEL) are periplasmic. The chain crosses the membrane as a helical span at residues 358-380 (INWAKLGILVGSISSAVIGYSWL). Topologically, residues 381–388 (RVRLRPSV) are cytoplasmic.

The protein belongs to the NhaA Na(+)/H(+) (TC 2.A.33) antiporter family.

The protein localises to the cell inner membrane. It catalyses the reaction Na(+)(in) + 2 H(+)(out) = Na(+)(out) + 2 H(+)(in). In terms of biological role, na(+)/H(+) antiporter that extrudes sodium in exchange for external protons. The chain is Na(+)/H(+) antiporter NhaA from Shigella flexneri.